The primary structure comprises 457 residues: Aromatic amino acid transport protein AroP (457 aa).

At 1 to 18 (MMEGQQHGEQLKRGLKNR) the chain is on the cytoplasmic side. The helical transmembrane segment at 19 to 39 (HIQLIALGGAIGTGLFLGSAS) threads the bilayer. Residues 40–42 (VIQ) are Periplasmic-facing. The chain crosses the membrane as a helical span at residues 43–63 (SAGPGIILGYAIAGFIAFLIM). Residues 64-98 (RQLGEMVVEEPVAGSFSHFAYKYWGSFAGFASGWN) lie on the Cytoplasmic side of the membrane. The chain crosses the membrane as a helical span at residues 99–119 (YWVLYVLVAMAELTAVGKYIQ). Over 120–124 (FWYPE) the chain is Periplasmic. Residues 125 to 145 (IPTWVSAAVFFVVINAINLTN) traverse the membrane as a helical segment. Residues 146-147 (VK) lie on the Cytoplasmic side of the membrane. The chain crosses the membrane as a helical span at residues 148-168 (VFGEMEFWFAIIKVIAVVAMI). Residues 169 to 192 (IFGGWLLFSGNGGPQATVSNLWDQ) are Periplasmic-facing. The helical transmembrane segment at 193-213 (GGFLPHGFTGLVMMMAIIMFS) threads the bilayer. The Cytoplasmic portion of the chain corresponds to 214–239 (FGGLELVGITAAEADNPEQSIPKATN). A helical membrane pass occupies residues 240 to 260 (QVIYRILIFYIGSLAVLLSLM). The Periplasmic portion of the chain corresponds to 261–279 (PWTRVTADTSPFVLIFHEL). The helical transmembrane segment at 280–300 (GDTFVANALNIVVLTAALSVY) threads the bilayer. The Cytoplasmic segment spans residues 301–330 (NSCVYCNSRMLFGLAQQGNAPKALASVDKR). Residues 331-351 (GVPVNTILVSALVTALCVLIN) form a helical membrane-spanning segment. At 352-359 (YLAPESAF) the chain is on the periplasmic side. Residues 360–380 (GLLMALVVSALVINWAMISLA) traverse the membrane as a helical segment. At 381–402 (HMKFRRAKQEQGVVTRFPALLY) the chain is on the cytoplasmic side. A helical transmembrane segment spans residues 403 to 423 (PLGNWICLLFMAAVLVIMLMT). The Periplasmic portion of the chain corresponds to 424–426 (PGM). The helical transmembrane segment at 427 to 447 (AISVYLIPVWLIVLGIGYLFK) threads the bilayer. Topologically, residues 448 to 457 (EKTAKAVKAH) are cytoplasmic.

Belongs to the amino acid-polyamine-organocation (APC) superfamily. Amino acid transporter (AAT) (TC 2.A.3.1) family.

It is found in the cell inner membrane. It catalyses the reaction L-phenylalanine(in) + H(+)(in) = L-phenylalanine(out) + H(+)(out). The enzyme catalyses L-tryptophan(in) + H(+)(in) = L-tryptophan(out) + H(+)(out). It carries out the reaction L-tyrosine(in) + H(+)(in) = L-tyrosine(out) + H(+)(out). Strong, mutual inhibition of uptake by tyrosine, phenylalanine, and tryptophan. Transport is also inhibited by the aromatic analogs p-fluorophenylalanine, beta-2-thienylalanine and 5-methyltryptophan. Permease that is involved in the active transport across the cytoplasmic membrane of all three aromatic amino acids, phenylalanine, tyrosine and tryptophan. The polypeptide is Aromatic amino acid transport protein AroP (Escherichia coli (strain K12)).